A 390-amino-acid chain; its full sequence is S-adenosylmethionine synthase 3 (390 aa).

E9 is a Mg(2+) binding site. Position 15 (H15) interacts with ATP. E43 contacts K(+). Positions 56 and 99 each coordinate L-methionine. ATP is bound by residues 167-169, 235-238, D246, 252-253, A269, K273, and K277; these read DGK, SGRF, and RK. D246 serves as a coordination point for L-methionine. K277 serves as a coordination point for L-methionine.

It belongs to the AdoMet synthase family. As to quaternary structure, homotetramer. Mn(2+) serves as cofactor. The cofactor is Mg(2+). It depends on Co(2+) as a cofactor. Requires K(+) as cofactor. NH4(+) is required as a cofactor. In terms of tissue distribution, mostly expressed in roots, and, to a lower extent, in hypocotyls and cotyledons.

Its subcellular location is the cytoplasm. It carries out the reaction L-methionine + ATP + H2O = S-adenosyl-L-methionine + phosphate + diphosphate. Its pathway is amino-acid biosynthesis; S-adenosyl-L-methionine biosynthesis; S-adenosyl-L-methionine from L-methionine: step 1/1. Inhibited by products of SAMS reaction (SAM, Pi, PPi), substrate analogs (cycloleucine and ethionine), and alternative nucleotides (GTP, CTP and ADP). Strongly repressed by PPPi. In terms of biological role, catalyzes the formation of S-adenosylmethionine from methionine and ATP. The reaction comprises two steps that are both catalyzed by the same enzyme: formation of S-adenosylmethionine (AdoMet) and triphosphate, and subsequent hydrolysis of the triphosphate. The chain is S-adenosylmethionine synthase 3 (SAMS3) from Catharanthus roseus (Madagascar periwinkle).